A 182-amino-acid polypeptide reads, in one-letter code: Nucleoside-triphosphatase THEP1 (182 aa).

ATP is bound by residues 10–17 (GRPGIGKT) and 102–109 (VVVIDEIG).

It belongs to the THEP1 NTPase family.

The enzyme catalyses a ribonucleoside 5'-triphosphate + H2O = a ribonucleoside 5'-diphosphate + phosphate + H(+). Functionally, has nucleotide phosphatase activity towards ATP, GTP, CTP, TTP and UTP. May hydrolyze nucleoside diphosphates with lower efficiency. The polypeptide is Nucleoside-triphosphatase THEP1 (Thermofilum pendens (strain DSM 2475 / Hrk 5)).